The primary structure comprises 161 residues: MKRIRIPMTLALGAALTIAPLSFASAEENPAPKMSQTTTAGTTAADVGLNVNLDVLGIANQIADAIKSAQNRDGFVKNLMESSFYASGQKYNVMVFNLSQEYEDHLNGVQFYGSAVYDGITYGIWVFEDGTFTNKGDGGWINWAFRGWFDRDGSTVAFHRP.

Positions 1-26 (MKRIRIPMTLALGAALTIAPLSFASA) are cleaved as a signal peptide.

The chain is Stress response protein YvgO (yvgO) from Bacillus subtilis (strain 168).